Consider the following 142-residue polypeptide: Large ribosomal subunit protein uL11 (142 aa).

It belongs to the universal ribosomal protein uL11 family. In terms of assembly, part of the ribosomal stalk of the 50S ribosomal subunit. Interacts with L10 and the large rRNA to form the base of the stalk. L10 forms an elongated spine to which L12 dimers bind in a sequential fashion forming a multimeric L10(L12)X complex. In terms of processing, one or more lysine residues are methylated.

In terms of biological role, forms part of the ribosomal stalk which helps the ribosome interact with GTP-bound translation factors. The sequence is that of Large ribosomal subunit protein uL11 from Magnetococcus marinus (strain ATCC BAA-1437 / JCM 17883 / MC-1).